Reading from the N-terminus, the 201-residue chain is Ribosomal RNA small subunit methyltransferase G (201 aa).

S-adenosyl-L-methionine contacts are provided by residues Gly71, Phe76, 120 to 121 (LE), and Arg134.

The protein belongs to the methyltransferase superfamily. RNA methyltransferase RsmG family.

The protein localises to the cytoplasm. It carries out the reaction guanosine(527) in 16S rRNA + S-adenosyl-L-methionine = N(7)-methylguanosine(527) in 16S rRNA + S-adenosyl-L-homocysteine. In terms of biological role, specifically methylates the N7 position of guanine in position 527 of 16S rRNA. The chain is Ribosomal RNA small subunit methyltransferase G from Rhodospirillum rubrum (strain ATCC 11170 / ATH 1.1.1 / DSM 467 / LMG 4362 / NCIMB 8255 / S1).